Consider the following 1225-residue polypeptide: Cohesin subunit SA-3 (1225 aa).

A disordered region spans residues 1-97; that stretch reads MSSPLQRAVG…HSRKQSEPPA (97 aa). Low complexity predominate over residues 15–26; the sequence is ALSASSSSSASL. Over residues 45–54 the composition is skewed to acidic residues; that stretch reads LADEDTDFED. Composition is skewed to basic residues over residues 59 to 69 and 76 to 90; these read NVKKRAAKRPP and KHPK…RHSR. An SCD domain is found at 309–394; the sequence is FVHRYRDVLP…SRFKDRMVSM (86 aa). Disordered regions lie at residues 546 to 567, 1063 to 1113, and 1177 to 1225; these read SEGH…KERK, AETS…STAV, and EEDE…IEDF. Positions 1078 to 1089 are enriched in basic and acidic residues; sequence VEGPAKPNREDV. Over residues 1090–1099 the composition is skewed to low complexity; that stretch reads SSSQEESLQL. The segment covering 1177-1191 has biased composition (acidic residues); the sequence is EEDEEEELEIQDESN. Polar residues predominate over residues 1198 to 1209; the sequence is DMQASSYSSTSE. Ser-1203 bears the Phosphoserine mark. A compositionally biased stretch (acidic residues) spans 1216–1225; sequence DSTELDIEDF.

The protein belongs to the SCC3 family. In terms of assembly, component of the meiosis-specific cohesin complex, which also contains the SMC1 (SMC1A or SMC1B) and SMC3 heterodimer. Such complex likely contains RAD21, or the meiosis-specific related protein REC8. Interacts with CCDC79/TERB1; recruiting cohesin to telomeres to develop structural rigidity. Phosphorylated. In terms of tissue distribution, testis specific.

It is found in the nucleus. Its subcellular location is the chromosome. It localises to the centromere. Functionally, meiosis specific component of cohesin complex. The cohesin complex is required for the cohesion of sister chromatids after DNA replication. The cohesin complex apparently forms a large proteinaceous ring within which sister chromatids can be trapped. At anaphase, the complex is cleaved and dissociates from chromatin, allowing sister chromatids to segregate. The meiosis-specific cohesin complex probably replaces mitosis specific cohesin complex when it dissociates from chromatin during prophase I. This chain is Cohesin subunit SA-3 (STAG3), found in Homo sapiens (Human).